A 77-amino-acid chain; its full sequence is Metallothionein-like protein 2B (77 aa).

It belongs to the metallothionein superfamily. Type 15 family. As to expression, expressed in vascular tissues of all organs. Expressed in root and leaf phloem, pollen and root hairs.

Metallothioneins have a high content of cysteine residues that bind various heavy metals. Functions as a metal chelator of copper (Cu) and zinc (Zn). Functions cooperatively with the phytochelatin synthase PCS1 to protect plants from Cu and cadmium toxicity. Plays a role in Cu homeostasis, specifically in the remobilization of Cu from senescing leaves. The mobilization of Cu from internal sources is important for seed development. The chain is Metallothionein-like protein 2B (MT2B) from Arabidopsis thaliana (Mouse-ear cress).